We begin with the raw amino-acid sequence, 210 residues long: MGQVFLLMPVLLVSCFLSHGAAIENQRLFNIAVSRVQHLHLLAQKMFNDFDGTLLPDERRQLNKIFLLDFCNSDSIVSPIDKHETQKSSVLKLLHISFRLIESWEYPSQTLIISNSLMVRNANQISEKLSDLKVGINLLITGNQDGVLSLDDNDSQQLPPYGNYYQNLGGDGNVRRNYELLACFKKDMHKVETYLTVAKCRKSLEANCTL.

Positions 1-22 (MGQVFLLMPVLLVSCFLSHGAA) are cleaved as a signal peptide. Position 38 (His-38) interacts with Zn(2+). An intrachain disulfide couples Cys-71 to Cys-183. Residue Glu-192 participates in Zn(2+) binding. Cysteines 200 and 208 form a disulfide.

The protein belongs to the somatotropin/prolactin family.

Its subcellular location is the secreted. Its function is as follows. Growth hormone plays an important role in growth control and is involved in the regulation of several anabolic processes. Implicated as an osmoregulatory substance important for seawater adaptation. The protein is Somatotropin (gh) of Oncorhynchus masou (Cherry salmon).